The chain runs to 571 residues: Pectinesterase/pectinesterase inhibitor (571 aa).

The interval 27 to 178 is pectinesterase inhibitor; that stretch reads NSHQKAVESL…KILSSNAIDI (152 aa). Positions 233–254 are disordered; the sequence is AQAGRPGAPADEGIGEGGGGGG. The pectinesterase stretch occupies residues 259–558; it reads THVVAKDGSG…TVANWLTPAN (300 aa). Substrate is bound by residues T336 and Q366. D389 functions as the Proton donor; for pectinesterase activity in the catalytic mechanism. The active-site Nucleophile; for pectinesterase activity is the D410. 2 residues coordinate substrate: R479 and W481.

The protein in the N-terminal section; belongs to the PMEI family. In the C-terminal section; belongs to the pectinesterase family.

It localises to the secreted. The protein resides in the cell wall. The enzyme catalyses [(1-&gt;4)-alpha-D-galacturonosyl methyl ester](n) + n H2O = [(1-&gt;4)-alpha-D-galacturonosyl](n) + n methanol + n H(+). It participates in glycan metabolism; pectin degradation; 2-dehydro-3-deoxy-D-gluconate from pectin: step 1/5. Acts in the modification of cell walls via demethylesterification of cell wall pectin. In Brassica campestris (Field mustard), this protein is Pectinesterase/pectinesterase inhibitor.